The sequence spans 447 residues: Cysteine--tRNA ligase (447 aa).

C28 provides a ligand contact to Zn(2+). A 'HIGH' region motif is present at residues 30–40 (PTVYNYIHIGN). Residues C211, H236, and E240 each coordinate Zn(2+). Positions 268–272 (KMSKS) match the 'KMSKS' region motif. Residue K271 participates in ATP binding.

The protein belongs to the class-I aminoacyl-tRNA synthetase family. In terms of assembly, monomer. Zn(2+) serves as cofactor.

Its subcellular location is the cytoplasm. It catalyses the reaction tRNA(Cys) + L-cysteine + ATP = L-cysteinyl-tRNA(Cys) + AMP + diphosphate. This Streptococcus agalactiae serotype Ia (strain ATCC 27591 / A909 / CDC SS700) protein is Cysteine--tRNA ligase.